The chain runs to 447 residues: MREILHIQGGQCGNQIGAKFWEVVCDEHGIDPTGRYTGNSDLQLERVNVYYNEASCGRFVPRAVLMDLEPGTMDSVRTGPYGQIFRPDNFVFGQSGAGNNWAKGHYTEGAELIDSVLDVVRKEAENCDCLQGFQVCHSLGGGTGSGMGTLLISKIREEYPDRMMLTFSVFPSPKVSDTVVEPYNATLSVHQLVENADECMVLDNEALYDICFRTLKLTTPSFGDLNHLISATMSGVTCCLRFPGQLNSDLRKLAVNLIPFPRLHFFMVGFAPLTSRGSQQYRALTVPELTQQMWDAKNMMCAADPRHGRYLTASAMFRGKMSTKEVDEQMINVQNKNSSYFVEWIPNNVKSSVCDIPPRGLSMASTFIGNSTSIQEMFRRVSEQFTAMFRRKAFLHWYTGEGMDEMEFTEAESNMNDLVSEYQQYQDATADEEGEYEDEEQQEADDM.

Residues Gln-11, Glu-69, Ser-138, Gly-142, Thr-143, Gly-144, Asn-204, and Asn-226 each coordinate GTP. Glu-69 provides a ligand contact to Mg(2+). Residues 423–447 (QQYQDATADEEGEYEDEEQQEADDM) form a disordered region. The span at 429 to 447 (TADEEGEYEDEEQQEADDM) shows a compositional bias: acidic residues.

Belongs to the tubulin family. In terms of assembly, dimer of alpha and beta chains. A typical microtubule is a hollow water-filled tube with an outer diameter of 25 nm and an inner diameter of 15 nM. Alpha-beta heterodimers associate head-to-tail to form protofilaments running lengthwise along the microtubule wall with the beta-tubulin subunit facing the microtubule plus end conferring a structural polarity. Microtubules usually have 13 protofilaments but different protofilament numbers can be found in some organisms and specialized cells. The cofactor is Mg(2+). Expressed in roots and leaf sheaths.

The protein localises to the cytoplasm. It is found in the cytoskeleton. In terms of biological role, tubulin is the major constituent of microtubules, a cylinder consisting of laterally associated linear protofilaments composed of alpha- and beta-tubulin heterodimers. Microtubules grow by the addition of GTP-tubulin dimers to the microtubule end, where a stabilizing cap forms. Below the cap, tubulin dimers are in GDP-bound state, owing to GTPase activity of alpha-tubulin. This Oryza sativa subsp. japonica (Rice) protein is Tubulin beta-4 chain (TUBB4).